Consider the following 269-residue polypeptide: Interleukin-1 beta (269 aa).

Residues 1-116 constitute a propeptide, removed in mature form; by CASP1; it reads MAEVPELASE…TWDNEAYVHD (116 aa). The Involved in interaction with TMED10 C-terminus signature appears at 228 to 241; the sequence is FESAQFPNWYISTS.

The protein belongs to the IL-1 family. In terms of assembly, monomer. In its precursor form, weakly interacts with full-length MEFV; the mature cytokine does not interact at all. Interacts with integrins ITGAV:ITGBV and ITGA5:ITGB1; integrin-binding is required for IL1B signaling. Interacts with cargo receptor TMED10; the interaction is direct and is required for the secretion of IL1B mature form. Interacts with HSP90AB1; the interaction facilitates cargo translocation into the ERGIC. Interacts with HSP90B1; the interaction facilitates cargo translocation into the ERGIC. Post-translationally, activation of the IL1B precursor involves a CASP1-catalyzed proteolytic cleavage. Processing and secretion are temporarily associated. In terms of processing, (Microbial infection) Cleavage by S.pyogenes cysteine protease SpeB promotes its activation independently of CASP1. Expressed in activated monocytes/macrophages (at protein level).

It localises to the cytoplasm. The protein localises to the cytosol. The protein resides in the secreted. Its subcellular location is the lysosome. It is found in the extracellular exosome. (Microbial infection) Cleavage by S.pyogenes cysteine protease SpeB promotes its activation independently of CASP1. SpeB-mediated maturation of IL1B plays a dual role depending on infection site: while IL1B inflammatory response prevents bacterial growth during invasive skin infections, it promotes streptococcal infection of the nasopharynx by disrupting colonization resistance mediated by the microbiota. Its function is as follows. Potent pro-inflammatory cytokine. Initially discovered as the major endogenous pyrogen, induces prostaglandin synthesis, neutrophil influx and activation, T-cell activation and cytokine production, B-cell activation and antibody production, and fibroblast proliferation and collagen production. Promotes Th17 differentiation of T-cells. Synergizes with IL12/interleukin-12 to induce IFNG synthesis from T-helper 1 (Th1) cells. Plays a role in angiogenesis by inducing VEGF production synergistically with TNF and IL6. Involved in transduction of inflammation downstream of pyroptosis: its mature form is specifically released in the extracellular milieu by passing through the gasdermin-D (GSDMD) pore. Acts as a sensor of S.pyogenes infection in skin: cleaved and activated by pyogenes SpeB protease, leading to an inflammatory response that prevents bacterial growth during invasive skin infection. The polypeptide is Interleukin-1 beta (Homo sapiens (Human)).